A 110-amino-acid polypeptide reads, in one-letter code: Late cornified envelope protein 1A (110 aa).

The segment covering 1-10 has biased composition (low complexity); sequence MSCQQSQQQC. Disordered regions lie at residues 1–23 and 83–110; these read MSCQQSQQQCQPPPKCTPKCPPK and QSSGCCSQPSGGSSCCGGDSGQHSGGCC. The segment covering 11–23 has biased composition (pro residues); that stretch reads QPPPKCTPKCPPK. A compositionally biased stretch (low complexity) spans 83–95; sequence QSSGCCSQPSGGS. Residues 96 to 110 show a composition bias toward gly residues; sequence SCCGGDSGQHSGGCC.

It belongs to the LCE family. As to quaternary structure, interacts with CYSRT1. In terms of tissue distribution, skin-specific. Expression was readily detected in adult trunk skin, adult arm skin, fetal skin, penal skin, vulva, esophagus and tongue. Not expressed in the cervix, rectum, lung, colon, or placenta.

Precursors of the cornified envelope of the stratum corneum. This is Late cornified envelope protein 1A (LCE1A) from Homo sapiens (Human).